A 551-amino-acid chain; its full sequence is Urocanate hydratase (551 aa).

Residues 48-49 (GG), glutamine 126, 172-174 (GMG), glutamate 192, arginine 197, 238-239 (NA), 259-263 (QTSAH), 269-270 (YI), and tyrosine 318 contribute to the NAD(+) site. Cysteine 406 is an active-site residue. Glycine 488 provides a ligand contact to NAD(+).

It belongs to the urocanase family. It depends on NAD(+) as a cofactor.

The protein localises to the cytoplasm. The enzyme catalyses 4-imidazolone-5-propanoate = trans-urocanate + H2O. It functions in the pathway amino-acid degradation; L-histidine degradation into L-glutamate; N-formimidoyl-L-glutamate from L-histidine: step 2/3. Functionally, catalyzes the conversion of urocanate to 4-imidazolone-5-propionate. The chain is Urocanate hydratase from Symbiobacterium thermophilum (strain DSM 24528 / JCM 14929 / IAM 14863 / T).